Reading from the N-terminus, the 419-residue chain is Histidine--tRNA ligase (419 aa).

This sequence belongs to the class-II aminoacyl-tRNA synthetase family. In terms of assembly, homodimer.

It localises to the cytoplasm. It catalyses the reaction tRNA(His) + L-histidine + ATP = L-histidyl-tRNA(His) + AMP + diphosphate + H(+). This Halothermothrix orenii (strain H 168 / OCM 544 / DSM 9562) protein is Histidine--tRNA ligase.